A 452-amino-acid chain; its full sequence is Glutamyl-tRNA(Gln) amidotransferase subunit A (452 aa).

Active-site charge relay system residues include K56 and S131. Residue S155 is the Acyl-ester intermediate of the active site.

This sequence belongs to the amidase family. GatA subfamily. As to quaternary structure, heterotrimer of A, B and C subunits.

The enzyme catalyses L-glutamyl-tRNA(Gln) + L-glutamine + ATP + H2O = L-glutaminyl-tRNA(Gln) + L-glutamate + ADP + phosphate + H(+). In terms of biological role, allows the formation of correctly charged Gln-tRNA(Gln) through the transamidation of misacylated Glu-tRNA(Gln) in organisms which lack glutaminyl-tRNA synthetase. The reaction takes place in the presence of glutamine and ATP through an activated gamma-phospho-Glu-tRNA(Gln). The protein is Glutamyl-tRNA(Gln) amidotransferase subunit A of Campylobacter concisus (strain 13826).